Reading from the N-terminus, the 90-residue chain is Probable small nuclear ribonucleoprotein E (90 aa).

The 76-residue stretch at 14–89 (VNLIFRYLQN…ITLIHAAQQE (76 aa)) folds into the Sm domain.

The protein belongs to the snRNP Sm proteins family. In terms of assembly, core component of the spliceosomal U1, U2, U4 and U5 small nuclear ribonucleoproteins (snRNPs), the building blocks of the spliceosome.

Its subcellular location is the nucleus. The protein resides in the cytoplasm. It is found in the cytosol. Its function is as follows. Plays a role in pre-mRNA splicing as a core component of the spliceosomal U1, U2, U4 and U5 small nuclear ribonucleoproteins (snRNPs), the building blocks of the spliceosome. The protein is Probable small nuclear ribonucleoprotein E (snr-6) of Caenorhabditis elegans.